The following is a 414-amino-acid chain: Bifunctional protein GlmU (414 aa).

Positions 1 to 208 are pyrophosphorylase; sequence MDAVILCAGS…SSKLYGIELN (208 aa). Residues 6–9, Q74, and G79 contribute to the UTP site; that span reads LCAG. 4 residues coordinate N-acetyl-alpha-D-glucosamine 1-phosphate: T80, G130, N142, and N162. Residues 209 to 228 form a linker region; it reads GYWNDIGRPWDVLSANNYFL. The interval 229-414 is N-acetyltransferase; sequence KNIMPKISGN…KDELIIKKRN (186 aa). The Proton acceptor role is filled by H312. A388 and K405 together coordinate acetyl-CoA.

It in the N-terminal section; belongs to the N-acetylglucosamine-1-phosphate uridyltransferase family. In the C-terminal section; belongs to the transferase hexapeptide repeat family.

It carries out the reaction N-acetyl-alpha-D-glucosamine 1-phosphate + UTP + H(+) = UDP-N-acetyl-alpha-D-glucosamine + diphosphate. The enzyme catalyses alpha-D-glucosamine 1-phosphate + acetyl-CoA = N-acetyl-alpha-D-glucosamine 1-phosphate + CoA + H(+). Its pathway is nucleotide-sugar biosynthesis; UDP-N-acetyl-alpha-D-glucosamine biosynthesis; N-acetyl-alpha-D-glucosamine 1-phosphate from alpha-D-glucosamine 6-phosphate (route II): step 2/2. It functions in the pathway nucleotide-sugar biosynthesis; UDP-N-acetyl-alpha-D-glucosamine biosynthesis; UDP-N-acetyl-alpha-D-glucosamine from N-acetyl-alpha-D-glucosamine 1-phosphate: step 1/1. Catalyzes the last two sequential reactions in the de novo biosynthetic pathway for UDP-N-acetyl-glucosamine (UDP-GlcNAc). Responsible for the acetylation of GlcN-1-P to GlcNAc-1-P, and for the uridyl transfer from UTP to GlcNAc-1-P, to produce UDP-GlcNAc and pyrophosphate. The protein is Bifunctional protein GlmU of Methanococcus vannielii (strain ATCC 35089 / DSM 1224 / JCM 13029 / OCM 148 / SB).